A 255-amino-acid polypeptide reads, in one-letter code: Thiazole synthase (255 aa).

Residue lysine 96 is the Schiff-base intermediate with DXP of the active site. Residues glycine 157, 183 to 184 (AG), and 205 to 206 (NT) each bind 1-deoxy-D-xylulose 5-phosphate.

The protein belongs to the ThiG family. Homotetramer. Forms heterodimers with either ThiH or ThiS.

It localises to the cytoplasm. The enzyme catalyses [ThiS sulfur-carrier protein]-C-terminal-Gly-aminoethanethioate + 2-iminoacetate + 1-deoxy-D-xylulose 5-phosphate = [ThiS sulfur-carrier protein]-C-terminal Gly-Gly + 2-[(2R,5Z)-2-carboxy-4-methylthiazol-5(2H)-ylidene]ethyl phosphate + 2 H2O + H(+). The protein operates within cofactor biosynthesis; thiamine diphosphate biosynthesis. In terms of biological role, catalyzes the rearrangement of 1-deoxy-D-xylulose 5-phosphate (DXP) to produce the thiazole phosphate moiety of thiamine. Sulfur is provided by the thiocarboxylate moiety of the carrier protein ThiS. In vitro, sulfur can be provided by H(2)S. The polypeptide is Thiazole synthase (Staphylococcus saprophyticus subsp. saprophyticus (strain ATCC 15305 / DSM 20229 / NCIMB 8711 / NCTC 7292 / S-41)).